A 478-amino-acid chain; its full sequence is MDDDNGLELSLGLSLGGSSGKAKARDAPLEPKAEPQVEESSSKGGLQTPDAPSGKFYQKSADNHEQNSKQRHSPVAPQFGNFWGQPGNSSGPVVDGSVEPVSHQPQLSSYQDGRMPINSGNNSEEQKPVSGNHKLPSEEMNFQKKHQTASDQPDAFSKSSDGGAKNAPISISTDDGSTGENEDVAESEAEGSNSWLVAQREDSAKGSVVNKGTDRKRSADAAADGFKGKRQPSFSGSESSSGKLTPGNLISMQASNVVALPYQVPGQVSGPPVLTNAPNFHPVCTVQLRPPTNGGLAVQTMGSASQVAFGYPAVQLPTLETGSSWAFGAPPQALSSFTAKDKADQTGTKQVDDGKKPREAGASSSAHAEDEKKADRGLSLMGSAIRPGIAPNVKFGGSGSYPDLPWVSTIGAGPNGRTISGVTYKFGRNEVKIVCACHGTHMSPEEFMRHASADAPAQDNSATLPAFPAGNQATSAEN.

Disordered stretches follow at residues 1 to 247 (MDDD…LTPG), 336 to 374 (SFTAKDKADQTGTKQVDDGKKPREAGASSSAHAEDEKKA), and 454 to 478 (DAPAQDNSATLPAFPAGNQATSAEN). Residues 23–35 (KARDAPLEPKAEP) are compositionally biased toward basic and acidic residues. Over residues 169 to 179 (ISISTDDGSTG) the composition is skewed to polar residues. The segment covering 180-189 (ENEDVAESEA) has biased composition (acidic residues). A compositionally biased stretch (low complexity) spans 233–242 (SFSGSESSSG). A compositionally biased stretch (basic and acidic residues) spans 339-359 (AKDKADQTGTKQVDDGKKPRE).

Belongs to the Ninja family.

It is found in the nucleus. The sequence is that of Ninja-family protein 7 from Zea mays (Maize).